Reading from the N-terminus, the 507-residue chain is ATP synthase subunit alpha, chloroplastic (507 aa).

170–177 (GDRQTGKT) contributes to the ATP binding site.

The protein belongs to the ATPase alpha/beta chains family. F-type ATPases have 2 components, CF(1) - the catalytic core - and CF(0) - the membrane proton channel. CF(1) has five subunits: alpha(3), beta(3), gamma(1), delta(1), epsilon(1). CF(0) has four main subunits: a, b, b' and c.

Its subcellular location is the plastid. The protein localises to the chloroplast thylakoid membrane. It carries out the reaction ATP + H2O + 4 H(+)(in) = ADP + phosphate + 5 H(+)(out). Produces ATP from ADP in the presence of a proton gradient across the membrane. The alpha chain is a regulatory subunit. This is ATP synthase subunit alpha, chloroplastic from Gossypium barbadense (Sea Island cotton).